The chain runs to 216 residues: Uracil phosphoribosyltransferase (216 aa).

GTP contacts are provided by residues Arg-32, Arg-41, 75-78 (LGKI), and Lys-77. Arg-85 provides a ligand contact to 5-phospho-alpha-D-ribose 1-diphosphate. Arg-102 is a GTP binding site. Arg-110 provides a ligand contact to 5-phospho-alpha-D-ribose 1-diphosphate. Arg-131 lines the GTP pocket. 5-phospho-alpha-D-ribose 1-diphosphate is bound by residues Asp-137 and 137–145 (DPMLATGGS). Residue Tyr-201 participates in D-ribose 5-phosphate binding. Residues Leu-202 and 207–209 (GDF) each bind uracil. Asp-208 serves as a coordination point for 5-phospho-alpha-D-ribose 1-diphosphate.

It belongs to the UPRTase family. The cofactor is Mg(2+).

It catalyses the reaction UMP + diphosphate = 5-phospho-alpha-D-ribose 1-diphosphate + uracil. It functions in the pathway pyrimidine metabolism; UMP biosynthesis via salvage pathway; UMP from uracil: step 1/1. With respect to regulation, allosterically activated by GTP. In terms of biological role, catalyzes the conversion of uracil and 5-phospho-alpha-D-ribose 1-diphosphate (PRPP) to UMP and diphosphate. This Lachancea kluyveri (Yeast) protein is Uracil phosphoribosyltransferase (FUR1).